Reading from the N-terminus, the 567-residue chain is MSKQIQIPDIGSDEVTVTEVMVNVGDTISVDQSIINVEGDKASMEVPAPEAGVVKEILVKVGDKVSTGTPMLVLEAAGAAPAADEPTAPVADAPTAPVVATAPTASAIVEVNVPDIGGDEVNVTEIMVAVGDTITEEQSLITVEGDKASMEVPAPFGGVVKEILVKSGDKVSTGSLIMRFEVLGAAPAESASAPASTSAPQTAAPATTAQAPQAAAPDTTAQAPQAAAPDTTAQAAQSNNNVSGLSQEQVEASTGYAHATPVIRRLAREFGVNLDKVKGTGRKGRIVKEDIEAYVKTAVKAYESGATAQATGNGVANGAGLGLLPWPKVDFSKFGEIEEVELSRINKISGANLHRNWVIIPHVTHFDKADITDLEAFRKEQNALREKQKLGVKITPVVFIMKAVAKALEAYPRFNSSITEDAQRLILKKYINIGVAVDTPNGLVVPVFKNVNKKGIIELSRELMEVSKKAREGKLTASDMQGGCFTISSLGGIGTTHFAPIVNAPEVAILGVSKSSMEPVWNGKEFAPRLILPMSLSFDHRVIDGADGARFISYLGSVLADLRRLVM.

Lipoyl-binding domains follow at residues 2–75 (SKQI…LVLE) and 108–181 (IVEV…MRFE). N6-lipoyllysine is present on residues K41 and K147. The span at 192-238 (SAPASTSAPQTAAPATTAQAPQAAAPDTTAQAPQAAAPDTTAQAAQS) shows a compositional bias: low complexity. Residues 192-249 (SAPASTSAPQTAAPATTAQAPQAAAPDTTAQAPQAAAPDTTAQAAQSNNNVSGLSQEQ) form a disordered region. Residues 239 to 249 (NNNVSGLSQEQ) show a composition bias toward polar residues. The region spanning 258 to 295 (HATPVIRRLAREFGVNLDKVKGTGRKGRIVKEDIEAYV) is the Peripheral subunit-binding (PSBD) domain. Active-site residues include C484, H540, and D544.

This sequence belongs to the 2-oxoacid dehydrogenase family. In terms of assembly, forms a 24-polypeptide structural core with octahedral symmetry. Requires (R)-lipoate as cofactor.

The catalysed reaction is N(6)-[(R)-dihydrolipoyl]-L-lysyl-[protein] + acetyl-CoA = N(6)-[(R)-S(8)-acetyldihydrolipoyl]-L-lysyl-[protein] + CoA. The pyruvate dehydrogenase complex catalyzes the overall conversion of pyruvate to acetyl-CoA and CO(2). It contains multiple copies of three enzymatic components: pyruvate dehydrogenase (E1), dihydrolipoamide acetyltransferase (E2) and lipoamide dehydrogenase (E3). This is Dihydrolipoyllysine-residue acetyltransferase component of pyruvate dehydrogenase complex (aceF) from Haemophilus influenzae (strain ATCC 51907 / DSM 11121 / KW20 / Rd).